The following is a 1935-amino-acid chain: Myosin-7 (1935 aa).

The region spanning 32-81 is the Myosin N-terminal SH3-like domain; sequence DLKKDVYVPDDKEEFVKAKILSREGGKVTAETEHGKTVTVKEDQVLQQNP. The Myosin motor domain occupies 85–778; that stretch reads DKIEDMAMLT…LLGLLEEMRD (694 aa). Lysine 129 is subject to N6,N6,N6-trimethyllysine. Residue 178–185 participates in ATP binding; sequence GESGAGKT. Threonine 378 bears the Phosphothreonine mark. 2 actin-binding regions span residues 655-677 and 757-771; these read LNKL…IPNE and KFGH…GLLG. The IQ domain occupies 781 to 810; that stretch reads LSRIITRIQAQSRGVLSRMEFKKLLERRDS. The stretch at 839–1935 forms a coiled coil; the sequence is LLKSAETEKE…DIGTKGLNEE (1097 aa). Residues serine 1137 and serine 1269 each carry the phosphoserine modification. Phosphothreonine is present on threonine 1282. At tyrosine 1308 the chain carries Phosphotyrosine. Position 1309 is a phosphothreonine (threonine 1309). Serine 1510 is modified (phosphoserine). Threonine 1513 is subject to Phosphothreonine. A disordered region spans residues 1907 to 1935; sequence EERADIAESQVNKLRAKSRDIGTKGLNEE. Residues 1923-1935 show a composition bias toward basic and acidic residues; it reads KSRDIGTKGLNEE.

This sequence belongs to the TRAFAC class myosin-kinesin ATPase superfamily. Myosin family. In terms of assembly, muscle myosin is a hexameric protein that consists of 2 heavy chain subunits (MHC), 2 alkali light chain subunits (MLC) and 2 regulatory light chain subunits (MLC-2). Interacts with ECPAS. Interacts (via C-terminus) with LRRC39.

Its subcellular location is the cytoplasm. It localises to the myofibril. The protein localises to the sarcomere. Myosins are actin-based motor molecules with ATPase activity essential for muscle contraction. Forms regular bipolar thick filaments that, together with actin thin filaments, constitute the fundamental contractile unit of skeletal and cardiac muscle. This is Myosin-7 (MYH7) from Sus scrofa (Pig).